The chain runs to 258 residues: Snake venom serine protease BPA (258 aa).

The signal sequence occupies residues 1-18 (MVLIRVIANLLILQLSNA). Residues 19–24 (QKSSEL) constitute a propeptide that is removed on maturation. Positions 25–249 (VIGGDECNIT…YLPWIQSIIA (225 aa)) constitute a Peptidase S1 domain. Intrachain disulfides connect cysteine 31-cysteine 163, cysteine 50-cysteine 66, cysteine 98-cysteine 256, cysteine 142-cysteine 210, cysteine 174-cysteine 189, and cysteine 200-cysteine 225. 2 N-linked (GlcNAc...) asparagine glycosylation sites follow: asparagine 32 and asparagine 44. The active-site Charge relay system is the histidine 65. N-linked (GlcNAc...) asparagine glycosylation is present at asparagine 103. Residue aspartate 110 is the Charge relay system of the active site. Asparagine 121 carries N-linked (GlcNAc...) asparagine glycosylation. Residue serine 133 is glycosylated (O-linked (GalNAc...) serine). Asparagine 154 and asparagine 170 each carry an N-linked (GlcNAc...) asparagine glycan. Residue serine 204 is the Charge relay system of the active site. 2 N-linked (GlcNAc...) asparagine glycosylation sites follow: asparagine 211 and asparagine 251. An O-linked (GalNAc...) threonine glycan is attached at threonine 255.

Belongs to the peptidase S1 family. Snake venom subfamily. In terms of assembly, monomer. In terms of processing, N- and O-glycosylated. The glycosylation has a stabilizing effect on the protein. However, the removal of part of the carbohydrates enhances the proteolytic activity of the SVSP towards human and rat fibrinogen. Expressed by the venom gland.

It localises to the secreted. Its activity is regulated as follows. Inhibited by diisopropylfluorophosphate (DFP), but not by SBTI, Antithrombin III/heparin and BPTI, probably due to steric hindrance caused by its huge carbohydrate moietie. Functionally, snake venom serine protease that has a potent and selective fibrinogenolytic activity. Preferentially cleaves the alpha-chain (FGA) of human and rat fibrinogen at Arg-|-Gly bonds, and slowly digests the beta-chain (FGB). In vivo, completely avoids thrombus formation induced in rat, decreases the fibrinogen plasma level and prolonges the recalcification time. Possesses esterolytic and amidolytic activities. The protein is Snake venom serine protease BPA of Bothrops jararaca (Jararaca).